The chain runs to 92 residues: Transcription factor PRE5 (92 aa).

In terms of domain architecture, bHLH spans 4–59 (RRSRQTSNASRISDDQMIDLVSKLRQFLPEIHERRRSDKVSASKVLQETCNYIRKL).

This sequence belongs to the bHLH protein family. In terms of assembly, interacts with IBH1.

It is found in the nucleus. Atypical and probable non DNA-binding bHLH transcription factor that integrates multiple signaling pathways to regulate cell elongation and plant development. May have a regulatory role in various aspects of gibberellin-dependent growth and development. This chain is Transcription factor PRE5 (PRE5), found in Arabidopsis thaliana (Mouse-ear cress).